A 280-amino-acid chain; its full sequence is Transcription factor MYB46 (280 aa).

2 consecutive HTH myb-type domains span residues V15–L67 and R68–L122. 2 DNA-binding regions (H-T-H motif) span residues W43–L67 and W95–I118. Residues S129–A150 are disordered.

As to expression, expressed at low levels in stems and siliques, specifically in xylem.

It localises to the nucleus. In terms of biological role, transcription activator. Involved in the regulation of secondary wall biosynthesis in fibers and vessels. Transcription activator of the mannan synthase CSLA9 that recognizes and binds to the DNA consensus sequence 5'-[AG][GT]T[AT]GGT[GA]-3' cis-regulatory element of CSLA9 promoter. Transcription factor that acts as a molecular switch in the NAC012/SND1-mediated transcriptional network regulating secondary wall biosynthesis. Is directly activated by NAC012/SND1. Functions redundantly with MYB83 in the transcriptional regulatory cascade leading to secondary wall formation in fibers and vessels. Transcription activator that binds to the DNA consensus sequence 5'-ACC[AT]A[AC][TC]-3', designated as the secondary wall MYB-responsive element (SMRE). Regulates directly numerous transcription factors and a number of genes involved in secondary wall biosynthesis that contain SMRE elements in their promoters. Is an obligate component of the transcriptional regulatory complex toward the commitment of secondary wall cellulose synthesis. Is required for functional expression of the three secondary wall CESA genes, CESA4, CESA7 and CESA8. In Arabidopsis thaliana (Mouse-ear cress), this protein is Transcription factor MYB46.